Consider the following 429-residue polypeptide: Ribosomal RNA small subunit methyltransferase B (429 aa).

Residues 254-260 (CAAPGGK), D277, D303, and D322 each bind S-adenosyl-L-methionine. Catalysis depends on C375, which acts as the Nucleophile.

It belongs to the class I-like SAM-binding methyltransferase superfamily. RsmB/NOP family.

The protein localises to the cytoplasm. It carries out the reaction cytidine(967) in 16S rRNA + S-adenosyl-L-methionine = 5-methylcytidine(967) in 16S rRNA + S-adenosyl-L-homocysteine + H(+). Specifically methylates the cytosine at position 967 (m5C967) of 16S rRNA. The chain is Ribosomal RNA small subunit methyltransferase B from Yersinia enterocolitica serotype O:8 / biotype 1B (strain NCTC 13174 / 8081).